The chain runs to 794 residues: MNINLDSAKDVLCKNILIYGYCKFQDKGCAFSHNKQLTTPQQQQQQQQIEEEEESIRQGGTAVGVPGSQRNKGAGAGTGAKAIQSNGMVNSQETQSKRRFDANSPLFQPAVNNAKGTAVTNLASKFSNLSPRIRDAPVFKPENESPISQELNSKLATSGLGSIYSSKKFNASTPSFTPTGFDFSVAAQVGNNPGSTAPANLQLQQKQPQQPQQPQQPQQHQQQQQLGLQNLNQTQLGRNLNVLLQPQISQPFIPANAIPPSSAAGQLQLHMQVQQPQAQTQPPSHLTPSSIMSSAPMSAGFYTSALPIPQGGGMRNQPPSASMYPLQYHLYAPAPPPRLAVPTKEYETDSQQLFLPNELRESLHRKNEASLQTMQHLSLPDHVNSYHSLVPIDKSYDSSSKIWPGKSTVLFKCNSNFDGNLYALRKIEPCNEIVDETPFRNIRKWKSLHNNANIVALRDAFTTMAFSNTFSSPNSSAGNEVVGANGASLCFVYDYYPNLTTLLERHKKGIRVVPITEDLLWSYLTQLVNAVAAIHAKKLALRSTIDLSKIINTTEDRIKLSGCGISEVLSFSASNANASSGEEDEEREFARLRALDIVDLGKVLLELSALLLPMNLRASLTSTLLKNLANSTKLSQNFLDVLQVLTDPSLLQEPYSFDMDQFILQYISSHFMTLMNKLQNSHDWVELQLSTELENARLFRLMTKINFIISEMPTYDLNSQNRLKIIKVFQENLFNSVGPNGKKVVNMDRVLVNLNKLDCGIDEKTLLISDKECMIITFKEIKELIDTQFRLLRG.

The segment at 7–36 (SAKDVLCKNILIYGYCKFQDKGCAFSHNKQ) adopts a C3H1-type zinc-finger fold. Disordered stretches follow at residues 40-97 (PQQQ…TQSK) and 187-226 (AQVG…QQQL). Polar residues-rich tracts occupy residues 83 to 94 (IQSNGMVNSQET) and 189 to 199 (VGNNPGSTAPA). Low complexity predominate over residues 200–226 (NLQLQQKQPQQPQQPQQPQQHQQQQQL). The tract at residues 372-668 (QTMQHLSLPD…MDQFILQYIS (297 aa)) is pseudokinase domain. Residues Arg-425 and 494–501 (DYYPNLTT) contribute to the ATP site. Residues 669–707 (SHFMTLMNKLQNSHDWVELQLSTELENARLFRLMTKINF) are a coiled coil. Positions 708-794 (IISEMPTYDL…IDTQFRLLRG (87 aa)) are knob domain.

Belongs to the protein kinase superfamily. PAN3 family. As to quaternary structure, homodimer. Forms a heterotrimer with a catalytic subunit PAN2 to form the poly(A)-nuclease (PAN) deadenylation complex. Interacts (via PAM-2 motif) with poly(A)-binding protein PAB1 (via PABC domain), conferring substrate specificity of the enzyme complex.

It is found in the cytoplasm. Regulatory subunit of the poly(A)-nuclease (PAN) deadenylation complex, one of two cytoplasmic mRNA deadenylases involved in mRNA turnover. PAN specifically shortens poly(A) tails of RNA and the activity is stimulated by poly(A)-binding protein PAB1. PAN deadenylation is followed by rapid degradation of the shortened mRNA tails by the CCR4-NOT complex. Deadenylated mRNAs are then degraded by two alternative mechanisms, namely exosome-mediated 3'-5' exonucleolytic degradation, or deadenylation-dependent mRNA decaping and subsequent 5'-3' exonucleolytic degradation by XRN1. May also be involved in post-transcriptional maturation of mRNA poly(A) tails. PAN3 acts as a positive regulator for PAN activity, recruiting the catalytic subunit PAN2 to mRNA via its interaction with RNA and with PAB1. The polypeptide is PAN2-PAN3 deadenylation complex subunit PAN3 (Lodderomyces elongisporus (strain ATCC 11503 / CBS 2605 / JCM 1781 / NBRC 1676 / NRRL YB-4239) (Yeast)).